A 310-amino-acid polypeptide reads, in one-letter code: HPr kinase/phosphorylase (310 aa).

Catalysis depends on residues H138 and K159. Residue 153–160 (GKSGVGKS) coordinates ATP. S160 is a binding site for Mg(2+). The Proton acceptor; for phosphorylation activity. Proton donor; for dephosphorylation activity role is filled by D177. The important for the catalytic mechanism of both phosphorylation and dephosphorylation stretch occupies residues 201 to 210 (LEIRGLGIIN). E202 is a Mg(2+) binding site. R243 is a catalytic residue. The interval 264–269 (PVRPGR) is important for the catalytic mechanism of dephosphorylation.

It belongs to the HPrK/P family. As to quaternary structure, homohexamer. The cofactor is Mg(2+).

It carries out the reaction [HPr protein]-L-serine + ATP = [HPr protein]-O-phospho-L-serine + ADP + H(+). The catalysed reaction is [HPr protein]-O-phospho-L-serine + phosphate + H(+) = [HPr protein]-L-serine + diphosphate. In terms of biological role, catalyzes the ATP- as well as the pyrophosphate-dependent phosphorylation of a specific serine residue in HPr, a phosphocarrier protein of the phosphoenolpyruvate-dependent sugar phosphotransferase system (PTS). HprK/P also catalyzes the pyrophosphate-producing, inorganic phosphate-dependent dephosphorylation (phosphorolysis) of seryl-phosphorylated HPr (P-Ser-HPr). The two antagonistic activities of HprK/P are regulated by several intracellular metabolites, which change their concentration in response to the absence or presence of rapidly metabolisable carbon sources (glucose, fructose, etc.) in the growth medium. Also phosphorylates/dephosphorylates the HPr-like catabolite repression protein crh on a specific serine residue. Therefore, by controlling the phosphorylation state of HPr and crh, HPrK/P is a sensor enzyme that plays a major role in the regulation of carbon metabolism and sugar transport: it mediates carbon catabolite repression (CCR), and regulates PTS-catalyzed carbohydrate uptake and inducer exclusion. The sequence is that of HPr kinase/phosphorylase from Bacillus pumilus (strain SAFR-032).